We begin with the raw amino-acid sequence, 138 residues long: Translation initiation factor 5A (138 aa).

Position 42 is a hypusine (Lys-42).

It belongs to the eIF-5A family.

It is found in the cytoplasm. Functionally, functions by promoting the formation of the first peptide bond. The protein is Translation initiation factor 5A (eif5a) of Pyrobaculum aerophilum (strain ATCC 51768 / DSM 7523 / JCM 9630 / CIP 104966 / NBRC 100827 / IM2).